A 205-amino-acid chain; its full sequence is Ribonuclease HII (205 aa).

An RNase H type-2 domain is found at 16–205 (VSEVGIDEVG…KSFLNQSDLI (190 aa)). A divalent metal cation contacts are provided by Asp22, Glu23, and Asp118.

Belongs to the RNase HII family. Requires Mn(2+) as cofactor. Mg(2+) is required as a cofactor.

The protein localises to the cytoplasm. It catalyses the reaction Endonucleolytic cleavage to 5'-phosphomonoester.. Functionally, endonuclease that specifically degrades the RNA of RNA-DNA hybrids. The protein is Ribonuclease HII of Prochlorococcus marinus (strain MIT 9312).